Reading from the N-terminus, the 161-residue chain is Nucleotide-binding protein HCH_04620 (161 aa).

It belongs to the YajQ family.

In terms of biological role, nucleotide-binding protein. This is Nucleotide-binding protein HCH_04620 from Hahella chejuensis (strain KCTC 2396).